Reading from the N-terminus, the 415-residue chain is Maltose excess protein 1, chloroplastic (415 aa).

The tract at residues 74–93 (SESDSDSDFPHENQQGNPGL) is disordered. 9 helical membrane passes run 139–159 (ALSA…LSLL), 176–196 (LGVV…AMPI), 199–219 (FVAT…YYFG), 231–251 (DVIT…TFVP), 252–272 (LVPN…AAII), 286–306 (FVGS…PVSQ), 322–342 (SITM…ALFI), 345–365 (LMWL…NILC), and 373–393 (SQSF…LALW).

Expressed in leaves and roots. Expressed in root cap cells.

The protein localises to the plastid. It localises to the chloroplast inner membrane. Probable maltose transporter. Essential for the conversion of starch to sucrose in leaves at night, probably via the export of maltose from the chloroplast. Required for root cap cells formation. This Arabidopsis thaliana (Mouse-ear cress) protein is Maltose excess protein 1, chloroplastic (MEX1).